A 429-amino-acid polypeptide reads, in one-letter code: Enolase (429 aa).

Gln163 serves as a coordination point for (2R)-2-phosphoglycerate. Glu205 serves as the catalytic Proton donor. The Mg(2+) site is built by Asp242, Glu287, and Asp314. Residues Lys339, Arg368, Ser369, and Lys390 each contribute to the (2R)-2-phosphoglycerate site. The Proton acceptor role is filled by Lys339.

The protein belongs to the enolase family. Requires Mg(2+) as cofactor.

It is found in the cytoplasm. Its subcellular location is the secreted. It localises to the cell surface. It catalyses the reaction (2R)-2-phosphoglycerate = phosphoenolpyruvate + H2O. Its pathway is carbohydrate degradation; glycolysis; pyruvate from D-glyceraldehyde 3-phosphate: step 4/5. Its function is as follows. Catalyzes the reversible conversion of 2-phosphoglycerate (2-PG) into phosphoenolpyruvate (PEP). It is essential for the degradation of carbohydrates via glycolysis. The polypeptide is Enolase (Cupriavidus taiwanensis (strain DSM 17343 / BCRC 17206 / CCUG 44338 / CIP 107171 / LMG 19424 / R1) (Ralstonia taiwanensis (strain LMG 19424))).